Here is a 509-residue protein sequence, read N- to C-terminus: ATP synthase subunit alpha (509 aa).

Residue 169–176 (GDRQTGKT) participates in ATP binding.

The protein belongs to the ATPase alpha/beta chains family. As to quaternary structure, F-type ATPases have 2 components, CF(1) - the catalytic core - and CF(0) - the membrane proton channel. CF(1) has five subunits: alpha(3), beta(3), gamma(1), delta(1), epsilon(1). CF(0) has four main subunits: a(1), b(1), b'(1) and c(9-12).

The protein localises to the cellular chromatophore membrane. The catalysed reaction is ATP + H2O + 4 H(+)(in) = ADP + phosphate + 5 H(+)(out). Functionally, produces ATP from ADP in the presence of a proton gradient across the membrane. The alpha chain is a regulatory subunit. This is ATP synthase subunit alpha from Rhodobacter capsulatus (Rhodopseudomonas capsulata).